The following is a 681-amino-acid chain: UvrABC system protein C (681 aa).

Residues Met1–Ala23 are disordered. The span at Asp14–Ala23 shows a compositional bias: acidic residues. The GIY-YIG domain maps to Asn67–Val145. Residues Gln255–Val290 form the UVR domain.

This sequence belongs to the UvrC family. Interacts with UvrB in an incision complex.

The protein resides in the cytoplasm. Functionally, the UvrABC repair system catalyzes the recognition and processing of DNA lesions. UvrC both incises the 5' and 3' sides of the lesion. The N-terminal half is responsible for the 3' incision and the C-terminal half is responsible for the 5' incision. This Agrobacterium fabrum (strain C58 / ATCC 33970) (Agrobacterium tumefaciens (strain C58)) protein is UvrABC system protein C.